Here is a 403-residue protein sequence, read N- to C-terminus: Argininosuccinate synthase (403 aa).

Residues 12–20 (AYSGGLDTS) and A39 each bind ATP. Positions 90 and 95 each coordinate L-citrulline. G120 is an ATP binding site. Residues T122, N126, and D127 each contribute to the L-aspartate site. N126 lines the L-citrulline pocket. 5 residues coordinate L-citrulline: R130, S182, S191, E267, and Y279.

Belongs to the argininosuccinate synthase family. Type 1 subfamily. Homotetramer.

Its subcellular location is the cytoplasm. The enzyme catalyses L-citrulline + L-aspartate + ATP = 2-(N(omega)-L-arginino)succinate + AMP + diphosphate + H(+). It participates in amino-acid biosynthesis; L-arginine biosynthesis; L-arginine from L-ornithine and carbamoyl phosphate: step 2/3. The sequence is that of Argininosuccinate synthase from Vesicomyosocius okutanii subsp. Calyptogena okutanii (strain HA).